Consider the following 364-residue polypeptide: UDP-N-acetylglucosamine--N-acetylmuramyl-(pentapeptide) pyrophosphoryl-undecaprenol N-acetylglucosamine transferase (364 aa).

Residues 10–12 (TGG), Asn-124, Arg-165, Ser-193, Ile-248, and Gln-293 contribute to the UDP-N-acetyl-alpha-D-glucosamine site.

It belongs to the glycosyltransferase 28 family. MurG subfamily.

The protein resides in the cell inner membrane. The catalysed reaction is di-trans,octa-cis-undecaprenyl diphospho-N-acetyl-alpha-D-muramoyl-L-alanyl-D-glutamyl-meso-2,6-diaminopimeloyl-D-alanyl-D-alanine + UDP-N-acetyl-alpha-D-glucosamine = di-trans,octa-cis-undecaprenyl diphospho-[N-acetyl-alpha-D-glucosaminyl-(1-&gt;4)]-N-acetyl-alpha-D-muramoyl-L-alanyl-D-glutamyl-meso-2,6-diaminopimeloyl-D-alanyl-D-alanine + UDP + H(+). Its pathway is cell wall biogenesis; peptidoglycan biosynthesis. Cell wall formation. Catalyzes the transfer of a GlcNAc subunit on undecaprenyl-pyrophosphoryl-MurNAc-pentapeptide (lipid intermediate I) to form undecaprenyl-pyrophosphoryl-MurNAc-(pentapeptide)GlcNAc (lipid intermediate II). The chain is UDP-N-acetylglucosamine--N-acetylmuramyl-(pentapeptide) pyrophosphoryl-undecaprenol N-acetylglucosamine transferase from Geobacter sulfurreducens (strain ATCC 51573 / DSM 12127 / PCA).